The following is a 557-amino-acid chain: Iron-sulfur cluster assembly SufBD family protein ABCI8, chloroplastic (557 aa).

The tract at residues 1–47 is disordered; sequence MASLLANGISSFSPQPTSDSSKSPKGFHPKPESLKFPSPKSLNPTRP. The N-terminal 52 residues, 1–52, are a transit peptide targeting the chloroplast; that stretch reads MASLLANGISSFSPQPTSDSSKSPKGFHPKPESLKFPSPKSLNPTRPIFKLR. Residues 10–24 show a composition bias toward low complexity; that stretch reads SSFSPQPTSDSSKSP.

It belongs to the iron-sulfur cluster assembly SufBD family.

The protein resides in the plastid. The protein localises to the chloroplast. Its function is as follows. Involved in light signaling, probably by mediating the transport and correct distribution of protoporphyrin IX, a chlorophyll precursor, in response to far-red light. This chain is Iron-sulfur cluster assembly SufBD family protein ABCI8, chloroplastic (ABCI8), found in Arabidopsis thaliana (Mouse-ear cress).